The chain runs to 136 residues: MWSRLVWLGLRAPLGGRQGFTSKADPQGSGRITAAVIEHLERLALVDFGSREAVARLEKAIAFADRLRAVDTDGVEPMESVLEDRCLYLRSDNVVEGNCADELLQNSHRVVEEYFVAPPGNISLPKLDEQEPFPHS.

It belongs to the GatC family. Subunit of the heterotrimeric GatCAB amidotransferase (AdT) complex, composed of A (QRSL1), B (GATB) and C (GATC) subunits.

It localises to the mitochondrion. The enzyme catalyses L-glutamyl-tRNA(Gln) + L-glutamine + ATP + H2O = L-glutaminyl-tRNA(Gln) + L-glutamate + ADP + phosphate + H(+). Its function is as follows. Allows the formation of correctly charged Gln-tRNA(Gln) through the transamidation of misacylated Glu-tRNA(Gln) in the mitochondria. The reaction takes place in the presence of glutamine and ATP through an activated gamma-phospho-Glu-tRNA(Gln). The protein is Glutamyl-tRNA(Gln) amidotransferase subunit C, mitochondrial of Homo sapiens (Human).